The primary structure comprises 259 residues: Global transcriptional regulator CodY (259 aa).

The interval 1–155 is GAF domain; it reads MNLLEKTRKI…GATVVGMEIL (155 aa). A DNA-binding region (H-T-H motif) is located at residues 203 to 222; it reads ASKIADRVGITRSVIVNALR. Position 215 is a phosphoserine (S215).

The protein belongs to the CodY family.

It is found in the cytoplasm. DNA-binding global transcriptional regulator which is involved in the adaptive response to starvation and acts by directly or indirectly controlling the expression of numerous genes in response to nutrient availability. During rapid exponential growth, CodY is highly active and represses genes whose products allow adaptation to nutrient depletion. The sequence is that of Global transcriptional regulator CodY from Geobacillus kaustophilus (strain HTA426).